Consider the following 342-residue polypeptide: S-adenosylmethionine:tRNA ribosyltransferase-isomerase (342 aa).

The protein belongs to the QueA family. In terms of assembly, monomer.

The protein resides in the cytoplasm. The enzyme catalyses 7-aminomethyl-7-carbaguanosine(34) in tRNA + S-adenosyl-L-methionine = epoxyqueuosine(34) in tRNA + adenine + L-methionine + 2 H(+). It functions in the pathway tRNA modification; tRNA-queuosine biosynthesis. Its function is as follows. Transfers and isomerizes the ribose moiety from AdoMet to the 7-aminomethyl group of 7-deazaguanine (preQ1-tRNA) to give epoxyqueuosine (oQ-tRNA). In Streptococcus mutans serotype c (strain ATCC 700610 / UA159), this protein is S-adenosylmethionine:tRNA ribosyltransferase-isomerase.